A 51-amino-acid chain; its full sequence is uncharacterized protein (51 aa).

It to E.coli YdfA.

This is an uncharacterized protein from Escherichia coli O157:H7.